The following is a 368-amino-acid chain: MASLVVIVSLLLAAFASPLLETAHSYNVTAPRVSLNPIDACWRRNPKWATNRQALAHCAVGYGKAAIGGKNGPIYVVTNPSDNPTRPSPGTLRYAVSQPKPLWITFARDMVIVLKSQLMINSYKTIDGRGAKVEIANGPCLRIRQVKHVIIHGISIHDCKADPNGMDGDGIRVFQSTHVWIDHCFLSRCHDGLIDVIVSSTAVTISNNYFTQHDKVMLLGHDDSYMGDKDMRVTIAFNTFGPGLIERMPRVRRGYAHVANNRYEKWQMYAIGGSANPIIFSEGNYFVAPEKRSSKQVTKRMMAGPDSKRWKWGTSRDVFMNGAFFGPPGVIVRPLYKGGEGFRVAHGSLVPSLTSSAGPLRCYVGRIC.

The signal sequence occupies residues 1–25 (MASLVVIVSLLLAAFASPLLETAHS). Asparagine 27 carries an N-linked (GlcNAc...) asparagine glycan. 3 residues coordinate Ca(2+): aspartate 167, aspartate 191, and aspartate 195. Residue arginine 247 is part of the active site.

The protein belongs to the polysaccharide lyase 1 family. Ca(2+) is required as a cofactor.

The enzyme catalyses Eliminative cleavage of (1-&gt;4)-alpha-D-galacturonan to give oligosaccharides with 4-deoxy-alpha-D-galact-4-enuronosyl groups at their non-reducing ends.. It participates in glycan metabolism; pectin degradation; 2-dehydro-3-deoxy-D-gluconate from pectin: step 2/5. This is Probable pectate lyase 4 from Arabidopsis thaliana (Mouse-ear cress).